The primary structure comprises 382 residues: MIASTGKTNLLGLTQQEMEKFFDSIGEKRFRAGQVMKWIHHFGVDDFDAMTNVSKALREKLKACAEVRGPEVVSEDISSDGTRKWVVRVESGSCVETVYIPQGKRGTLCVSSQAGCALDCSFCSTGKQGFNSNLTAAEVIGQVWIANKSFGSVPATVDRAITNVVMMGMGEPLLNFDNVIAAMHLMMDDLGYGISKRRVTLSTSGVVPMIDELSKHIDVSLALSLHAPNDALRNQLVPINKKYPLQMLLDSCRRYMSSLGEKRVLTIEYTMLKDINDKVEHAVEMIELLKDTPCKINLIPFNPFPHSGYERPSNNAIRRFQDLLHQAGYNVTVRTTRGEDIDAACGQLVGQVMDRTRRSERYIAVRELSAEAETAPVAATRT.

Catalysis depends on Glu-96, which acts as the Proton acceptor. Residues 102 to 342 form the Radical SAM core domain; the sequence is QGKRGTLCVS…VRTTRGEDID (241 aa). Residues Cys-109 and Cys-345 are joined by a disulfide bond. The [4Fe-4S] cluster site is built by Cys-116, Cys-120, and Cys-123. S-adenosyl-L-methionine contacts are provided by residues 170-171, Ser-202, 224-226, and Asn-302; these read GE and SLH. The active-site S-methylcysteine intermediate is Cys-345.

It belongs to the radical SAM superfamily. RlmN family. It depends on [4Fe-4S] cluster as a cofactor.

It localises to the cytoplasm. It catalyses the reaction adenosine(2503) in 23S rRNA + 2 reduced [2Fe-2S]-[ferredoxin] + 2 S-adenosyl-L-methionine = 2-methyladenosine(2503) in 23S rRNA + 5'-deoxyadenosine + L-methionine + 2 oxidized [2Fe-2S]-[ferredoxin] + S-adenosyl-L-homocysteine. It carries out the reaction adenosine(37) in tRNA + 2 reduced [2Fe-2S]-[ferredoxin] + 2 S-adenosyl-L-methionine = 2-methyladenosine(37) in tRNA + 5'-deoxyadenosine + L-methionine + 2 oxidized [2Fe-2S]-[ferredoxin] + S-adenosyl-L-homocysteine. In terms of biological role, specifically methylates position 2 of adenine 2503 in 23S rRNA and position 2 of adenine 37 in tRNAs. m2A2503 modification seems to play a crucial role in the proofreading step occurring at the peptidyl transferase center and thus would serve to optimize ribosomal fidelity. The polypeptide is Dual-specificity RNA methyltransferase RlmN (Pseudomonas savastanoi pv. phaseolicola (strain 1448A / Race 6) (Pseudomonas syringae pv. phaseolicola (strain 1448A / Race 6))).